We begin with the raw amino-acid sequence, 610 residues long: UvrABC system protein C (610 aa).

The region spanning 16-94 is the GIY-YIG domain; it reads SQPGVYRMYD…IKLYQPRYNV (79 aa). The region spanning 204 to 239 is the UVR domain; it reads DQVLTQLIARMEKASQDLAFEEAARIRDQIQAVRRV.

The protein belongs to the UvrC family. Interacts with UvrB in an incision complex.

It is found in the cytoplasm. Functionally, the UvrABC repair system catalyzes the recognition and processing of DNA lesions. UvrC both incises the 5' and 3' sides of the lesion. The N-terminal half is responsible for the 3' incision and the C-terminal half is responsible for the 5' incision. The polypeptide is UvrABC system protein C (Salmonella gallinarum (strain 287/91 / NCTC 13346)).